The sequence spans 252 residues: Ditrans,polycis-undecaprenyl-diphosphate synthase ((2E,6E)-farnesyl-diphosphate specific) (252 aa).

Aspartate 24 is an active-site residue. A Mg(2+)-binding site is contributed by aspartate 24. Residues glycine 25–arginine 28, tryptophan 29, arginine 37, histidine 41, and serine 69–glutamate 71 contribute to the substrate site. Catalysis depends on asparagine 72, which acts as the Proton acceptor. 3 residues coordinate substrate: tryptophan 73, arginine 75, and arginine 192. Histidine 197 contributes to the Mg(2+) binding site. Residue arginine 198–serine 200 participates in substrate binding. Glutamate 211 is a Mg(2+) binding site.

The protein belongs to the UPP synthase family. In terms of assembly, homodimer. It depends on Mg(2+) as a cofactor.

The enzyme catalyses 8 isopentenyl diphosphate + (2E,6E)-farnesyl diphosphate = di-trans,octa-cis-undecaprenyl diphosphate + 8 diphosphate. Catalyzes the sequential condensation of isopentenyl diphosphate (IPP) with (2E,6E)-farnesyl diphosphate (E,E-FPP) to yield (2Z,6Z,10Z,14Z,18Z,22Z,26Z,30Z,34E,38E)-undecaprenyl diphosphate (di-trans,octa-cis-UPP). UPP is the precursor of glycosyl carrier lipid in the biosynthesis of bacterial cell wall polysaccharide components such as peptidoglycan and lipopolysaccharide. This is Ditrans,polycis-undecaprenyl-diphosphate synthase ((2E,6E)-farnesyl-diphosphate specific) from Yersinia pestis.